A 401-amino-acid chain; its full sequence is Phosphoglycerate kinase (401 aa).

Residues 23–25 (DFN), R39, 62–65 (HLGR), R121, and R154 each bind substrate. ATP-binding positions include K207, G298, E329, and 355–358 (GGDT).

Belongs to the phosphoglycerate kinase family. As to quaternary structure, monomer.

Its subcellular location is the cytoplasm. It catalyses the reaction (2R)-3-phosphoglycerate + ATP = (2R)-3-phospho-glyceroyl phosphate + ADP. It participates in carbohydrate degradation; glycolysis; pyruvate from D-glyceraldehyde 3-phosphate: step 2/5. The chain is Phosphoglycerate kinase from Campylobacter fetus subsp. fetus (strain 82-40).